The primary structure comprises 270 residues: Eukaryotic translation initiation factor 2 subunit beta (270 aa).

The interval 1-38 (MADEEQMERKEEATEIAPFDPTKKKKKKKVVIQDPADE) is disordered.

Belongs to the eIF-2-beta/eIF-5 family. In terms of assembly, eukaryotic translation initiation factor 2 eIF2 is a heterotrimeric complex composed of an alpha, a beta and a gamma subunit.

The protein localises to the cytoplasm. The protein resides in the cytosol. In terms of biological role, component of the eIF2 complex that functions in the early steps of protein synthesis by forming a ternary complex with GTP and initiator tRNA. This complex binds to a 40S ribosomal subunit, followed by mRNA binding to form a 43S pre-initiation complex (43S PIC). Junction of the 60S ribosomal subunit to form the 80S initiation complex is preceded by hydrolysis of the GTP bound to eIF2 and release of an eIF2-GDP binary complex. In order for eIF2 to recycle and catalyze another round of initiation, the GDP bound to eIF2 must exchange with GTP by way of a reaction catalyzed by eIF2B. The chain is Eukaryotic translation initiation factor 2 subunit beta from Triticum aestivum (Wheat).